A 184-amino-acid chain; its full sequence is Probable maltose O-acetyltransferase (184 aa).

Asn84 is an acetyl-CoA binding site. His114 functions as the Proton donor/acceptor in the catalytic mechanism. Residues Gly141, Ser159, 164 to 165 (TK), Arg179, and Lys182 each bind acetyl-CoA.

This sequence belongs to the transferase hexapeptide repeat family. Homodimer.

The catalysed reaction is D-maltose + acetyl-CoA = 1-O-acetylmaltose + CoA. Its function is as follows. Catalyzes the CoA-dependent transfer of an acetyl group to maltose and other sugars. Acetylates glucose exclusively at the C6 position and maltose at the C6 position of the non-reducing end glucosyl moiety. Is able to acetylate maltooligosaccharides. The polypeptide is Probable maltose O-acetyltransferase (maa) (Bacillus subtilis (strain 168)).